A 356-amino-acid chain; its full sequence is DNA-directed RNA polymerase subunit alpha (356 aa).

The tract at residues M1–E230 is alpha N-terminal domain (alpha-NTD). The tract at residues I267–G356 is alpha C-terminal domain (alpha-CTD).

This sequence belongs to the RNA polymerase alpha chain family. As to quaternary structure, in plastids the minimal PEP RNA polymerase catalytic core is composed of four subunits: alpha, beta, beta', and beta''. When a (nuclear-encoded) sigma factor is associated with the core the holoenzyme is formed, which can initiate transcription.

It is found in the plastid. The protein localises to the chloroplast. It carries out the reaction RNA(n) + a ribonucleoside 5'-triphosphate = RNA(n+1) + diphosphate. In terms of biological role, DNA-dependent RNA polymerase catalyzes the transcription of DNA into RNA using the four ribonucleoside triphosphates as substrates. This is DNA-directed RNA polymerase subunit alpha from Zygnema circumcarinatum (Green alga).